We begin with the raw amino-acid sequence, 225 residues long: Peptidyl-prolyl cis-trans isomerase D (225 aa).

Residues 1-22 form the signal peptide; sequence MKLQFFSFITLFACLFTTAIFA. Residues 37-195 form the PPIase cyclophilin-type domain; it reads YFDINHGDKQ…KEVIIVESGE (159 aa). Residue N139 is glycosylated (N-linked (GlcNAc...) asparagine). The Prevents secretion from ER motif lies at 222–225; that stretch reads HDEL.

Belongs to the cyclophilin-type PPIase family. PPIase B subfamily.

It localises to the endoplasmic reticulum lumen. It catalyses the reaction [protein]-peptidylproline (omega=180) = [protein]-peptidylproline (omega=0). PPIases accelerate the folding of proteins. It catalyzes the cis-trans isomerization of proline imidic peptide bonds in oligopeptides. This chain is Peptidyl-prolyl cis-trans isomerase D, found in Saccharomyces cerevisiae (strain ATCC 204508 / S288c) (Baker's yeast).